The chain runs to 312 residues: Ribosomal RNA small subunit methyltransferase H (312 aa).

S-adenosyl-L-methionine-binding positions include 34 to 36 (AGH), aspartate 54, phenylalanine 81, aspartate 102, and glutamine 109.

This sequence belongs to the methyltransferase superfamily. RsmH family.

Its subcellular location is the cytoplasm. It carries out the reaction cytidine(1402) in 16S rRNA + S-adenosyl-L-methionine = N(4)-methylcytidine(1402) in 16S rRNA + S-adenosyl-L-homocysteine + H(+). Specifically methylates the N4 position of cytidine in position 1402 (C1402) of 16S rRNA. The polypeptide is Ribosomal RNA small subunit methyltransferase H (Geotalea daltonii (strain DSM 22248 / JCM 15807 / FRC-32) (Geobacter daltonii)).